Reading from the N-terminus, the 321-residue chain is uncharacterized protein (321 aa).

Belongs to the NAD(P)-dependent epimerase/dehydratase family.

This is an uncharacterized protein from Staphylococcus aureus (strain bovine RF122 / ET3-1).